A 157-amino-acid chain; its full sequence is Protein Smg homolog (157 aa).

The protein belongs to the Smg family.

The chain is Protein Smg homolog from Aliivibrio fischeri (strain ATCC 700601 / ES114) (Vibrio fischeri).